We begin with the raw amino-acid sequence, 180 residues long: Translation initiation factor IF-3 (180 aa).

Belongs to the IF-3 family. In terms of assembly, monomer.

Its subcellular location is the cytoplasm. In terms of biological role, IF-3 binds to the 30S ribosomal subunit and shifts the equilibrium between 70S ribosomes and their 50S and 30S subunits in favor of the free subunits, thus enhancing the availability of 30S subunits on which protein synthesis initiation begins. The sequence is that of Translation initiation factor IF-3 from Xylella fastidiosa (strain 9a5c).